A 485-amino-acid chain; its full sequence is Pyruvate kinase (485 aa).

Arg-33 is a binding site for substrate. Residues Asn-35, Ser-37, Asp-67, and Thr-68 each coordinate K(+). 35 to 38 provides a ligand contact to ATP; it reads NFSH. ATP is bound by residues Arg-74 and Lys-155. Residue Glu-221 coordinates Mg(2+). Substrate contacts are provided by Gly-244, Asp-245, and Thr-277. Asp-245 provides a ligand contact to Mg(2+).

It belongs to the pyruvate kinase family. As to quaternary structure, homotetramer. The cofactor is Mg(2+). It depends on K(+) as a cofactor.

The enzyme catalyses pyruvate + ATP = phosphoenolpyruvate + ADP + H(+). The protein operates within carbohydrate degradation; glycolysis; pyruvate from D-glyceraldehyde 3-phosphate: step 5/5. This is Pyruvate kinase (pyk) from Chlamydia trachomatis serovar D (strain ATCC VR-885 / DSM 19411 / UW-3/Cx).